We begin with the raw amino-acid sequence, 130 residues long: Small ribosomal subunit protein uS8 (130 aa).

Belongs to the universal ribosomal protein uS8 family. As to quaternary structure, part of the 30S ribosomal subunit. Contacts proteins S5 and S12.

Its function is as follows. One of the primary rRNA binding proteins, it binds directly to 16S rRNA central domain where it helps coordinate assembly of the platform of the 30S subunit. This Chromohalobacter salexigens (strain ATCC BAA-138 / DSM 3043 / CIP 106854 / NCIMB 13768 / 1H11) protein is Small ribosomal subunit protein uS8.